A 74-amino-acid polypeptide reads, in one-letter code: MASRNSVAVIALFAFVFAVISPFAGAQSLAPAPSPTSDGTSIDQGIAYLLMVVALVLTYLIHPLDASSSSYTFF.

The N-terminal stretch at 1-26 (MASRNSVAVIALFAFVFAVISPFAGA) is a signal peptide. Residue Gln27 is modified to Pyrrolidone carboxylic acid. 3 positions are modified to 4-hydroxyproline: Pro31, Pro33, and Pro35. O-linked (Ara...) hydroxyproline glycosylation is found at Pro31, Pro33, and Pro35. Residue Ser37 is the site of GPI-anchor amidated serine attachment. The propeptide at 38–74 (DGTSIDQGIAYLLMVVALVLTYLIHPLDASSSSYTFF) is removed in mature form.

It belongs to the AG-peptide AGP family. Contains 4-hydroxyproline; hydroxylated on Pro-31, Pro-33 and Pro-35. In terms of processing, O-glycosylated on hydroxyprolines; noncontiguous hydroxylproline residues are glycosylated with arabinogalactan.

It is found in the cell membrane. In terms of biological role, proteoglycan that seems to be implicated in diverse developmental roles such as differentiation, cell-cell recognition, embryogenesis and programmed cell death. The sequence is that of Arabinogalactan protein 20 from Arabidopsis thaliana (Mouse-ear cress).